The chain runs to 181 residues: ATP-dependent protease subunit HslV (181 aa).

Residue Thr9 is part of the active site. Na(+) is bound by residues Gly164, Cys167, and Thr170.

Belongs to the peptidase T1B family. HslV subfamily. A double ring-shaped homohexamer of HslV is capped on each side by a ring-shaped HslU homohexamer. The assembly of the HslU/HslV complex is dependent on binding of ATP.

It localises to the cytoplasm. It carries out the reaction ATP-dependent cleavage of peptide bonds with broad specificity.. Its activity is regulated as follows. Allosterically activated by HslU binding. Its function is as follows. Protease subunit of a proteasome-like degradation complex believed to be a general protein degrading machinery. The polypeptide is ATP-dependent protease subunit HslV (Gemmatimonas aurantiaca (strain DSM 14586 / JCM 11422 / NBRC 100505 / T-27)).